The sequence spans 973 residues: Probable outer membrane protein pmp13 (973 aa).

Residues 1–24 (MKTSIRKFLISTTLAPCFASTAFT) form the signal peptide. Residues 284-293 (QNNTASPQNS) show a composition bias toward polar residues. The interval 284-303 (QNNTASPQNSLPAPTPPPTP) is disordered. The Autotransporter domain occupies 691–973 (EDVPGKQLSI…TLDIGSKLRF (283 aa)).

This sequence belongs to the PMP outer membrane protein family.

It localises to the secreted. Its subcellular location is the cell wall. It is found in the cell outer membrane. The polypeptide is Probable outer membrane protein pmp13 (pmp13) (Chlamydia pneumoniae (Chlamydophila pneumoniae)).